A 65-amino-acid chain; its full sequence is Large ribosomal subunit protein bL35 (65 aa).

Basic residues predominate over residues 1-16 (MVPKQKTHSGAKKRFK). A disordered region spans residues 1–39 (MVPKQKTHSGAKKRFKLTGSGSVSRARAGMRHNFEHRSS).

The protein belongs to the bacterial ribosomal protein bL35 family.

This chain is Large ribosomal subunit protein bL35, found in Tropheryma whipplei (strain TW08/27) (Whipple's bacillus).